A 760-amino-acid polypeptide reads, in one-letter code: NAD(P)H-quinone oxidoreductase subunit 5, chloroplastic (760 aa).

16 helical membrane passes run 9 to 29 (WIIS…LLLF), 39 to 59 (IWAF…TDLF), 89 to 109 (IDPL…LVLV), 125 to 145 (FVYM…SNLI), 147 to 167 (IYIF…FWFT), 185 to 205 (GDFG…SFEF), 221 to 241 (NEVH…GAIA), 260 to 280 (TPIS…FLVA), 282 to 302 (LLPL…IGII), 329 to 349 (LGYT…FHLI), 356 to 376 (ALLF…VGYS), 398 to 418 (IAFL…CFWS), 429 to 449 (YSPI…FYMF), 556 to 576 (ILFP…IGIP), 620 to 640 (FSVS…KPIY), and 734 to 754 (FYLL…SSIF).

It belongs to the complex I subunit 5 family. In terms of assembly, NDH is composed of at least 16 different subunits, 5 of which are encoded in the nucleus.

Its subcellular location is the plastid. The protein localises to the chloroplast thylakoid membrane. The catalysed reaction is a plastoquinone + NADH + (n+1) H(+)(in) = a plastoquinol + NAD(+) + n H(+)(out). The enzyme catalyses a plastoquinone + NADPH + (n+1) H(+)(in) = a plastoquinol + NADP(+) + n H(+)(out). NDH shuttles electrons from NAD(P)H:plastoquinone, via FMN and iron-sulfur (Fe-S) centers, to quinones in the photosynthetic chain and possibly in a chloroplast respiratory chain. The immediate electron acceptor for the enzyme in this species is believed to be plastoquinone. Couples the redox reaction to proton translocation, and thus conserves the redox energy in a proton gradient. The protein is NAD(P)H-quinone oxidoreductase subunit 5, chloroplastic (ndhF) of Populus alba (White poplar).